The sequence spans 430 residues: Adenylosuccinate synthetase (430 aa).

Residues 12–18 and 40–42 contribute to the GTP site; these read GDEGKGK and GHT. The active-site Proton acceptor is D13. Mg(2+)-binding residues include D13 and G40. IMP is bound by residues 13–16, 38–41, T130, R144, Q224, T239, and R303; these read DEGK and NAGH. The active-site Proton donor is H41. 299-305 contributes to the substrate binding site; the sequence is TVTGRKR. GTP contacts are provided by residues R305, 331 to 333, and 413 to 415; these read KLD and STS.

Belongs to the adenylosuccinate synthetase family. As to quaternary structure, homodimer. Mg(2+) serves as cofactor.

The protein resides in the cytoplasm. The catalysed reaction is IMP + L-aspartate + GTP = N(6)-(1,2-dicarboxyethyl)-AMP + GDP + phosphate + 2 H(+). It participates in purine metabolism; AMP biosynthesis via de novo pathway; AMP from IMP: step 1/2. Functionally, plays an important role in the de novo pathway of purine nucleotide biosynthesis. Catalyzes the first committed step in the biosynthesis of AMP from IMP. This chain is Adenylosuccinate synthetase, found in Paracoccus denitrificans (strain Pd 1222).